The following is an 85-amino-acid chain: RNA-binding protein Hfq (85 aa).

Positions 9–68 (DPFLNALRRERIPVSIYLVNGIKLQGQVESFDQFVILLKNTVSQMVYKHAISTVVPARPV) constitute a Sm domain.

The protein belongs to the Hfq family. As to quaternary structure, homohexamer.

In terms of biological role, RNA chaperone that binds small regulatory RNA (sRNAs) and mRNAs to facilitate mRNA translational regulation in response to envelope stress, environmental stress and changes in metabolite concentrations. Also binds with high specificity to tRNAs. The chain is RNA-binding protein Hfq from Tolumonas auensis (strain DSM 9187 / NBRC 110442 / TA 4).